Reading from the N-terminus, the 158-residue chain is uncharacterized protein (158 aa).

This is an uncharacterized protein from Pasteurella multocida (strain Pm70).